A 50-amino-acid polypeptide reads, in one-letter code: Thrombin-like enzyme BpirSP41 (50 aa).

The 50-residue stretch at 1 to 50 (VVGGDECDINEHPFLAFLYSHGYFCGLTLINQEWVLTAAHCDRRFMRIYL) folds into the Peptidase S1 domain. A disulfide bond links Cys25 and Cys41. His40 serves as the catalytic Charge relay system.

It belongs to the peptidase S1 family. Snake venom subfamily. As to quaternary structure, monomer. In terms of processing, N-glycosylated. Expressed by the venom gland.

It is found in the secreted. Inhibited by serine protease inhibitors PMSF, benzamidine, leupeptin and aprotinin, as well as by copper ions (Cu2+). Not inhibited by metalloprotease inhibitors EDTA, EGTA and 1,10-phenanthroline, as well as by barium (Ba2+) and calcium ion (Ca2+). Its function is as follows. Snake venom serine protease that interferes with the hemostatic system of the prey. It almost completely degrades both Aalpha (FGA) and Bbeta (FGB) chains of fibrinogen. It presents a higher ability to degrade fibrin clots than BpirSP27. It hydrolyzes chromogenic substrates S-2238 (used for testing thrombin activity), S-2222 (factor Xa), S-2266 (glandular kallikrein and factor XIa), and S-2302 (plasma kallikrein, factor XIa and XIIa). It shows a decrease in the clotting time of human plasma in the presence of increasing doses of the enzyme. Its minimum coagulant dose (MCD) is 20 ug. It promotes platelet aggregation with a maximum of aggregation of 20%, regardless of the concentration increase or the presence of calcium. It also shows 40% inhibition of the hemolytic activity promoted by the complement pathways and possess only a minor role in the induction of edema and pain in rat. The protein is Thrombin-like enzyme BpirSP41 of Bothrops pirajai (Piraja's lancehead).